We begin with the raw amino-acid sequence, 421 residues long: Osmoprotective compounds-binding protein GgtB (421 aa).

The N-terminal stretch at 1-18 is a signal peptide; sequence MKFFKITTLIISLIVLTS. The N-palmitoyl cysteine moiety is linked to residue cysteine 19. Cysteine 19 carries S-diacylglycerol cysteine lipidation.

The protein belongs to the bacterial solute-binding protein 1 family. As to quaternary structure, the complex is composed of two ATP-binding proteins (GgtA), two transmembrane proteins (GgtC and GgtD) and a solute-binding protein (GgtB).

The protein resides in the cell membrane. Functionally, part of the ABC transporter complex GgtABCD involved in the uptake of the osmoprotective compounds glucosylglycerol (GG), sucrose and trehalose. Binds glucosylglycerol and exhibits a somewhat lower affinity towards sucrose and a substantially lower affinity towards trehalose. The chain is Osmoprotective compounds-binding protein GgtB from Synechocystis sp. (strain ATCC 27184 / PCC 6803 / Kazusa).